Here is a 476-residue protein sequence, read N- to C-terminus: Chromosomal replication initiator protein DnaA (476 aa).

A domain I, interacts with DnaA modulators region spans residues 1–73 (MTNSEQERWS…LSAWQAEMPE (73 aa)). The interval 73 to 132 (EVHRIDLSVRTAMRCATPAKEAPAAVEARRPERSDAKPVSDARAPVMTPVAASHDALGGS) is domain II. A disordered region spans residues 92–115 (KEAPAAVEARRPERSDAKPVSDAR). Over residues 99–112 (EARRPERSDAKPVS) the composition is skewed to basic and acidic residues. Positions 133 to 355 (PLDPRLTFAS…GAINRLLAHS (223 aa)) are domain III, AAA+ region. Positions 180, 182, 183, and 184 each coordinate ATP. Residues 356–476 (KLNNQPVTLD…VESLKRQLQD (121 aa)) form a domain IV, binds dsDNA region.

Belongs to the DnaA family. Oligomerizes as a right-handed, spiral filament on DNA at oriC.

Its subcellular location is the cytoplasm. Plays an essential role in the initiation and regulation of chromosomal replication. ATP-DnaA binds to the origin of replication (oriC) to initiate formation of the DNA replication initiation complex once per cell cycle. Binds the DnaA box (a 9 base pair repeat at the origin) and separates the double-stranded (ds)DNA. Forms a right-handed helical filament on oriC DNA; dsDNA binds to the exterior of the filament while single-stranded (ss)DNA is stabiized in the filament's interior. The ATP-DnaA-oriC complex binds and stabilizes one strand of the AT-rich DNA unwinding element (DUE), permitting loading of DNA polymerase. After initiation quickly degrades to an ADP-DnaA complex that is not apt for DNA replication. Binds acidic phospholipids. The sequence is that of Chromosomal replication initiator protein DnaA from Bradyrhizobium sp. (strain ORS 278).